We begin with the raw amino-acid sequence, 463 residues long: 3-phosphoshikimate 1-carboxyvinyltransferase (463 aa).

K26, S27, and R31 together coordinate 3-phosphoshikimate. A phosphoenolpyruvate-binding site is contributed by K26. The phosphoenolpyruvate site is built by G99 and R127. Positions 163, 164, 165, 188, 300, and 327 each coordinate 3-phosphoshikimate. Q165 lines the phosphoenolpyruvate pocket. D300 functions as the Proton acceptor in the catalytic mechanism. Residues R331 and R372 each coordinate phosphoenolpyruvate.

It belongs to the EPSP synthase family. As to quaternary structure, monomer.

The protein resides in the cytoplasm. The enzyme catalyses 3-phosphoshikimate + phosphoenolpyruvate = 5-O-(1-carboxyvinyl)-3-phosphoshikimate + phosphate. It functions in the pathway metabolic intermediate biosynthesis; chorismate biosynthesis; chorismate from D-erythrose 4-phosphate and phosphoenolpyruvate: step 6/7. In terms of biological role, catalyzes the transfer of the enolpyruvyl moiety of phosphoenolpyruvate (PEP) to the 5-hydroxyl of shikimate-3-phosphate (S3P) to produce enolpyruvyl shikimate-3-phosphate and inorganic phosphate. The chain is 3-phosphoshikimate 1-carboxyvinyltransferase from Burkholderia pseudomallei (Pseudomonas pseudomallei).